The sequence spans 160 residues: Ribosomal RNA large subunit methyltransferase H (160 aa).

S-adenosyl-L-methionine is bound by residues glycine 108 and phenylalanine 127 to tryptophan 132.

Belongs to the RNA methyltransferase RlmH family. In terms of assembly, homodimer.

It localises to the cytoplasm. It catalyses the reaction pseudouridine(1915) in 23S rRNA + S-adenosyl-L-methionine = N(3)-methylpseudouridine(1915) in 23S rRNA + S-adenosyl-L-homocysteine + H(+). Functionally, specifically methylates the pseudouridine at position 1915 (m3Psi1915) in 23S rRNA. This Beijerinckia indica subsp. indica (strain ATCC 9039 / DSM 1715 / NCIMB 8712) protein is Ribosomal RNA large subunit methyltransferase H.